Reading from the N-terminus, the 137-residue chain is Large ribosomal subunit protein uL13 (137 aa).

R55 bears the Citrulline mark. S73 is subject to Phosphoserine. At R136 the chain carries Citrulline.

Belongs to the universal ribosomal protein uL13 family. In terms of assembly, component of the 60S ribosome. Component of the GAIT complex. Interacts with EIF4G1. Phosphorylation at Ser-73 upon interferon-gamma treatment in macrophages involves a DAPK1-DAPK3 kinase cascade and is causing release from the ribosome, association with the GAIT complex and subsequent involvement in transcript-selective translation inhibition. In terms of processing, citrullinated by PADI4.

Its subcellular location is the cytoplasm. Its function is as follows. Associated with ribosomes but is not required for canonical ribosome function and has extra-ribosomal functions. Component of the GAIT (gamma interferon-activated inhibitor of translation) complex which mediates interferon-gamma-induced transcript-selective translation inhibition in inflammation processes. Upon interferon-gamma activation and subsequent phosphorylation dissociates from the ribosome and assembles into the GAIT complex which binds to stem loop-containing GAIT elements in the 3'-UTR of diverse inflammatory mRNAs (such as ceruplasmin) and suppresses their translation. In the GAIT complex interacts with m7G cap-bound eIF4G at or near the eIF3-binding site and blocks the recruitment of the 43S ribosomal complex. Involved in methylation of rRNA. The sequence is that of Large ribosomal subunit protein uL13 (RPL13A) from Sus scrofa (Pig).